Consider the following 425-residue polypeptide: Serine--tRNA ligase (425 aa).

2 disordered regions span residues 43 to 68 (QRSS…GSDP) and 108 to 131 (LPNL…RHCW). The span at 117-131 (PEGRDENDNQERHCW) shows a compositional bias: basic and acidic residues. 233–235 (TAE) contacts L-serine. 264–266 (RRE) provides a ligand contact to ATP. Glutamate 287 contacts L-serine. Residue 351 to 354 (EISS) participates in ATP binding. Serine 385 provides a ligand contact to L-serine.

This sequence belongs to the class-II aminoacyl-tRNA synthetase family. Type-1 seryl-tRNA synthetase subfamily. In terms of assembly, homodimer. The tRNA molecule binds across the dimer.

It localises to the cytoplasm. The catalysed reaction is tRNA(Ser) + L-serine + ATP = L-seryl-tRNA(Ser) + AMP + diphosphate + H(+). It carries out the reaction tRNA(Sec) + L-serine + ATP = L-seryl-tRNA(Sec) + AMP + diphosphate + H(+). The protein operates within aminoacyl-tRNA biosynthesis; selenocysteinyl-tRNA(Sec) biosynthesis; L-seryl-tRNA(Sec) from L-serine and tRNA(Sec): step 1/1. Functionally, catalyzes the attachment of serine to tRNA(Ser). Is also able to aminoacylate tRNA(Sec) with serine, to form the misacylated tRNA L-seryl-tRNA(Sec), which will be further converted into selenocysteinyl-tRNA(Sec). This chain is Serine--tRNA ligase, found in Prochlorococcus marinus (strain MIT 9303).